Here is a 352-residue protein sequence, read N- to C-terminus: Ion-translocating oxidoreductase complex subunit D (352 aa).

Transmembrane regions (helical) follow at residues 20–40 (IMLL…WFFG), 42–62 (GTLV…ALVL), 89–109 (IPPL…VIIA), and 123–143 (PAMI…TSWL). Threonine 187 is modified (FMN phosphoryl threonine). Transmembrane regions (helical) follow at residues 214–234 (ILAG…GVWL), 242–262 (WHIP…GWLF), 267–287 (LAAP…FFIL), 301–321 (LIFG…GGYP), and 322–342 (DGVA…DYYT).

Belongs to the NqrB/RnfD family. As to quaternary structure, the complex is composed of six subunits: RsxA, RsxB, RsxC, RsxD, RsxE and RsxG. The cofactor is FMN.

The protein localises to the cell inner membrane. Part of a membrane-bound complex that couples electron transfer with translocation of ions across the membrane. Required to maintain the reduced state of SoxR. The polypeptide is Ion-translocating oxidoreductase complex subunit D (Escherichia coli O81 (strain ED1a)).